The sequence spans 256 residues: Isoprenyl transferase (256 aa).

The active site involves Asp-33. Asp-33 lines the Mg(2+) pocket. Residues 34–37 (GNGR), Trp-38, Arg-46, His-50, and 78–80 (STE) each bind substrate. The Proton acceptor role is filled by Asn-81. Residues Trp-82, Arg-84, Arg-201, and 207–209 (RIS) each bind substrate. Position 220 (Glu-220) interacts with Mg(2+).

Belongs to the UPP synthase family. As to quaternary structure, homodimer. Mg(2+) serves as cofactor.

In terms of biological role, catalyzes the condensation of isopentenyl diphosphate (IPP) with allylic pyrophosphates generating different type of terpenoids. The polypeptide is Isoprenyl transferase (Staphylococcus aureus (strain COL)).